The sequence spans 509 residues: Maturase K (509 aa).

Belongs to the intron maturase 2 family. MatK subfamily.

It is found in the plastid. Its subcellular location is the chloroplast. Its function is as follows. Usually encoded in the trnK tRNA gene intron. Probably assists in splicing its own and other chloroplast group II introns. The chain is Maturase K from Clematis vitalba (Evergreen clematis).